A 624-amino-acid chain; its full sequence is tRNA uridine 5-carboxymethylaminomethyl modification enzyme MnmG (624 aa).

Residues 13 to 18, valine 125, and serine 180 contribute to the FAD site; that span reads GGGHAG. Position 273–287 (273–287) interacts with NAD(+); sequence GPRYCPSIEDKIVRF. Residue glutamine 370 coordinates FAD.

The protein belongs to the MnmG family. Homodimer. Heterotetramer of two MnmE and two MnmG subunits. FAD serves as cofactor.

It is found in the cytoplasm. Functionally, NAD-binding protein involved in the addition of a carboxymethylaminomethyl (cmnm) group at the wobble position (U34) of certain tRNAs, forming tRNA-cmnm(5)s(2)U34. This is tRNA uridine 5-carboxymethylaminomethyl modification enzyme MnmG from Legionella pneumophila subsp. pneumophila (strain Philadelphia 1 / ATCC 33152 / DSM 7513).